The sequence spans 266 residues: Undecaprenyl-diphosphatase (266 aa).

The next 8 helical transmembrane spans lie at 1 to 21 (MDTF…FLPI), 39 to 59 (QGLS…VMYF), 87 to 107 (WWII…KGFI), 111 to 131 (FRSI…LWWA), 144 to 164 (VGWK…IPGT), 183 to 203 (AAAR…AILV), 218 to 238 (ALGL…HYFL), and 246 to 266 (MTPF…FIFL).

The protein belongs to the UppP family.

The protein resides in the cell inner membrane. It catalyses the reaction di-trans,octa-cis-undecaprenyl diphosphate + H2O = di-trans,octa-cis-undecaprenyl phosphate + phosphate + H(+). Its function is as follows. Catalyzes the dephosphorylation of undecaprenyl diphosphate (UPP). Confers resistance to bacitracin. The sequence is that of Undecaprenyl-diphosphatase from Shewanella halifaxensis (strain HAW-EB4).